The following is a 509-amino-acid chain: Monocarboxylate transporter 9 (509 aa).

Topologically, residues 1-12 are cytoplasmic; sequence MELKKSPDGGWG. Transmembrane regions (helical) follow at residues 13–33, 53–73, 80–100, 102–122, 137–157, 164–184, 305–325, 342–362, 372–392, 398–418, 433–453, and 462–482; these read WVIVFVSFFTQFLCYGSPLAV, WVGSLASGVGLLASPVCSLCV, PVTIFSGFMVAGGLMLSSFAP, IYFLFFSYGIVVGLGCGLLYT, GLALGLISTGSSVGLFIYAAL, FYGLDGCLLIVGALALNILAC, VFSALFIAILLFDIGGFPPSL, IMPLISIIGIMTAVGKLLLGI, LYLYVATLIIMGLALCAIPFA, LALLSGILGFLTGNWSIFPYV, GILMFFAGLGNSLGPPIVGWF, and IAFYFSGFCVLLGGFILLLAA. Over 483–509 the chain is Cytoplasmic; it reads LPSWDTCNKQLPKPAPTTFLYKVASNV.

The protein belongs to the major facilitator superfamily. Monocarboxylate porter (TC 2.A.1.13) family.

The protein resides in the cell membrane. The enzyme catalyses creatine(in) = creatine(out). It carries out the reaction (R)-carnitine(in) = (R)-carnitine(out). Functionally, extracellular pH-and Na(+)-sensitive low-affinity creatine transporter. Also functions as a pH-independent carnitine efflux transporter. This is Monocarboxylate transporter 9 (SLC16A9) from Pongo abelii (Sumatran orangutan).